The sequence spans 715 residues: Elongation factor G (715 aa).

Residues 8 to 290 enclose the tr-type G domain; that stretch reads NRYRNIGICA…AVIDFLPAPT (283 aa). GTP-binding positions include 17-24, 88-92, and 142-145; these read AHVDAGKT, DTPGH, and NKMD.

It belongs to the TRAFAC class translation factor GTPase superfamily. Classic translation factor GTPase family. EF-G/EF-2 subfamily.

It localises to the cytoplasm. Functionally, catalyzes the GTP-dependent ribosomal translocation step during translation elongation. During this step, the ribosome changes from the pre-translocational (PRE) to the post-translocational (POST) state as the newly formed A-site-bound peptidyl-tRNA and P-site-bound deacylated tRNA move to the P and E sites, respectively. Catalyzes the coordinated movement of the two tRNA molecules, the mRNA and conformational changes in the ribosome. In Ectopseudomonas mendocina (strain ymp) (Pseudomonas mendocina), this protein is Elongation factor G.